The primary structure comprises 120 residues: NAD(P)H-quinone oxidoreductase subunit 3 (120 aa).

Helical transmembrane passes span 10 to 30 (FLGF…TNLI), 64 to 84 (MFAL…PWAV), and 89 to 109 (LGLL…IALA).

The protein belongs to the complex I subunit 3 family. In terms of assembly, NDH-1 can be composed of about 15 different subunits; different subcomplexes with different compositions have been identified which probably have different functions.

The protein resides in the cellular thylakoid membrane. The catalysed reaction is a plastoquinone + NADH + (n+1) H(+)(in) = a plastoquinol + NAD(+) + n H(+)(out). It carries out the reaction a plastoquinone + NADPH + (n+1) H(+)(in) = a plastoquinol + NADP(+) + n H(+)(out). Functionally, NDH-1 shuttles electrons from an unknown electron donor, via FMN and iron-sulfur (Fe-S) centers, to quinones in the respiratory and/or the photosynthetic chain. The immediate electron acceptor for the enzyme in this species is believed to be plastoquinone. Couples the redox reaction to proton translocation, and thus conserves the redox energy in a proton gradient. Cyanobacterial NDH-1 also plays a role in inorganic carbon-concentration. This is NAD(P)H-quinone oxidoreductase subunit 3 from Prochlorococcus marinus (strain AS9601).